The sequence spans 137 residues: Bombinin-like peptides 2 (137 aa).

The signal sequence occupies residues 1–18; the sequence is MNFKYIVAVSILIASAYA. At asparagine 70 the chain carries Asparagine amide. The disordered stretch occupies residues 92–112; the sequence is DSLEHPEEASEKETRGFNQEE. Isoleucine 136 is subject to Isoleucine amide.

The protein belongs to the bombinin family. As to expression, expressed by the skin glands.

The protein localises to the secreted. In terms of biological role, bombinin-like peptide 2 has antimicrobial activity, but no hemolytic activity. Preliminary evidence indicates that this peptide does not lyse and thus kill the bacteria by its antimicrobial activity. Its function is as follows. Bombinin H2 has antibacterial and hemolytic activity. In Bombina variegata (Yellow-bellied toad), this protein is Bombinin-like peptides 2.